A 126-amino-acid chain; its full sequence is MAFDKDAFLTALDSMTVLELNDLVKAIEEKFGVSAAAMAAPAAGGAAGGGAAAAEEKTEFNVVLADAGANKVAVIKAVREITGLGLKEAKDLVDGAPKNVKEGIAKADAEAAVKKLVEAGAKAELK.

This sequence belongs to the bacterial ribosomal protein bL12 family. In terms of assembly, homodimer. Part of the ribosomal stalk of the 50S ribosomal subunit. Forms a multimeric L10(L12)X complex, where L10 forms an elongated spine to which 2 to 4 L12 dimers bind in a sequential fashion. Binds GTP-bound translation factors.

Forms part of the ribosomal stalk which helps the ribosome interact with GTP-bound translation factors. Is thus essential for accurate translation. The polypeptide is Large ribosomal subunit protein bL12 (Acidovorax ebreus (strain TPSY) (Diaphorobacter sp. (strain TPSY))).